Consider the following 263-residue polypeptide: Ribosomal RNA small subunit methyltransferase A (263 aa).

S-adenosyl-L-methionine-binding residues include Asn20, Leu22, Gly47, Glu68, Asp90, and Asn111.

It belongs to the class I-like SAM-binding methyltransferase superfamily. rRNA adenine N(6)-methyltransferase family. RsmA subfamily.

The protein localises to the cytoplasm. It carries out the reaction adenosine(1518)/adenosine(1519) in 16S rRNA + 4 S-adenosyl-L-methionine = N(6)-dimethyladenosine(1518)/N(6)-dimethyladenosine(1519) in 16S rRNA + 4 S-adenosyl-L-homocysteine + 4 H(+). Functionally, specifically dimethylates two adjacent adenosines (A1518 and A1519) in the loop of a conserved hairpin near the 3'-end of 16S rRNA in the 30S particle. May play a critical role in biogenesis of 30S subunits. This Chlorobium chlorochromatii (strain CaD3) protein is Ribosomal RNA small subunit methyltransferase A.